The following is a 219-amino-acid chain: Elongation factor Ts (219 aa).

The tract at residues 82–85 (TDFV) is involved in Mg(2+) ion dislocation from EF-Tu.

This sequence belongs to the EF-Ts family.

Its subcellular location is the cytoplasm. Its function is as follows. Associates with the EF-Tu.GDP complex and induces the exchange of GDP to GTP. It remains bound to the aminoacyl-tRNA.EF-Tu.GTP complex up to the GTP hydrolysis stage on the ribosome. In Trichodesmium erythraeum (strain IMS101), this protein is Elongation factor Ts.